Reading from the N-terminus, the 161-residue chain is Probable ubiquitin-conjugating enzyme E2 16 (161 aa).

The region spanning 15 to 161 (IATNRLQKEL…TRWWFHDDKV (147 aa)) is the UBC core domain. Residue Cys-99 is the Glycyl thioester intermediate of the active site.

It belongs to the ubiquitin-conjugating enzyme family.

It carries out the reaction S-ubiquitinyl-[E1 ubiquitin-activating enzyme]-L-cysteine + [E2 ubiquitin-conjugating enzyme]-L-cysteine = [E1 ubiquitin-activating enzyme]-L-cysteine + S-ubiquitinyl-[E2 ubiquitin-conjugating enzyme]-L-cysteine.. It participates in protein modification; protein ubiquitination. Its function is as follows. Accepts the ubiquitin from the E1 complex and catalyzes its covalent attachment to other proteins. The polypeptide is Probable ubiquitin-conjugating enzyme E2 16 (UBC16) (Arabidopsis thaliana (Mouse-ear cress)).